The sequence spans 185 residues: Ribosome-recycling factor (185 aa).

The protein belongs to the RRF family.

It is found in the cytoplasm. Responsible for the release of ribosomes from messenger RNA at the termination of protein biosynthesis. May increase the efficiency of translation by recycling ribosomes from one round of translation to another. In Mycobacterium bovis (strain BCG / Pasteur 1173P2), this protein is Ribosome-recycling factor.